We begin with the raw amino-acid sequence, 103 residues long: MQKQKIRIRLKAFDYKLIDQSALEIVDTAKRTGAIVKGPVPLPTRMQRFDILRSPHVNKSSRDQFEIRTHQRLMDIVDPTDKTVDALMKLDLPAGVDVEIKLQ.

It belongs to the universal ribosomal protein uS10 family. In terms of assembly, part of the 30S ribosomal subunit.

In terms of biological role, involved in the binding of tRNA to the ribosomes. In Methylibium petroleiphilum (strain ATCC BAA-1232 / LMG 22953 / PM1), this protein is Small ribosomal subunit protein uS10.